Here is a 395-residue protein sequence, read N- to C-terminus: Elongation factor Tu (395 aa).

Positions 10 to 204 constitute a tr-type G domain; it reads KPHVNIGTIG…TVDSYIPEPK (195 aa). The tract at residues 19–26 is G1; the sequence is GHVDHGKT. Position 19–26 (19–26) interacts with GTP; that stretch reads GHVDHGKT. T26 provides a ligand contact to Mg(2+). The tract at residues 60–64 is G2; that stretch reads GITIN. The interval 81-84 is G3; the sequence is DAPG. GTP contacts are provided by residues 81 to 85 and 136 to 139; these read DAPGH and NKTD. The tract at residues 136–139 is G4; sequence NKTD. The segment at 174–176 is G5; the sequence is SAL.

It belongs to the TRAFAC class translation factor GTPase superfamily. Classic translation factor GTPase family. EF-Tu/EF-1A subfamily. In terms of assembly, monomer.

The protein localises to the cytoplasm. The enzyme catalyses GTP + H2O = GDP + phosphate + H(+). Its function is as follows. GTP hydrolase that promotes the GTP-dependent binding of aminoacyl-tRNA to the A-site of ribosomes during protein biosynthesis. This is Elongation factor Tu from Leuconostoc citreum (strain KM20).